Consider the following 334-residue polypeptide: Ornithine carbamoyltransferase (334 aa).

Carbamoyl phosphate-binding positions include 56-59, Gln83, Arg107, and 134-137; these read STRT and HPTQ. Residues Asn168, Asp232, and 236–237 contribute to the L-ornithine site; that span reads SM. Carbamoyl phosphate contacts are provided by residues 274 to 275 and Arg320; that span reads CL.

This sequence belongs to the aspartate/ornithine carbamoyltransferase superfamily. OTCase family.

The protein resides in the cytoplasm. The enzyme catalyses carbamoyl phosphate + L-ornithine = L-citrulline + phosphate + H(+). The protein operates within amino-acid biosynthesis; L-arginine biosynthesis; L-arginine from L-ornithine and carbamoyl phosphate: step 1/3. In terms of biological role, reversibly catalyzes the transfer of the carbamoyl group from carbamoyl phosphate (CP) to the N(epsilon) atom of ornithine (ORN) to produce L-citrulline. The polypeptide is Ornithine carbamoyltransferase (Escherichia coli O157:H7).